A 137-amino-acid polypeptide reads, in one-letter code: DNA-binding protein H-NS (137 aa).

A DNA-binding region spans residues 112–117; sequence QGRTPA.

Belongs to the histone-like protein H-NS family. In terms of assembly, homodimer that oligomerizes on DNA into higher-order complexes that form bridges between disparate regions of DNA compacting it. Interacts with Hha, YdgT and StpA.

The protein resides in the cytoplasm. It is found in the nucleoid. Its function is as follows. A DNA-binding protein implicated in transcriptional repression and chromosome organization and compaction. Binds nucleation sites in AT-rich DNA and bridges them, forming higher-order nucleoprotein complexes and condensing the chromosome. As many horizontally transferred genes are AT-rich, it plays a central role in silencing foreign genes. A subset of genes are repressed by H-NS in association with other proteins. This is DNA-binding protein H-NS (hns) from Salmonella paratyphi A (strain ATCC 9150 / SARB42).